Consider the following 311-residue polypeptide: tRNA-cytidine(32) 2-sulfurtransferase (311 aa).

The short motif at 47-52 (SGGKDS) is the PP-loop motif element. [4Fe-4S] cluster is bound by residues Cys-122, Cys-125, and Cys-213.

This sequence belongs to the TtcA family. In terms of assembly, homodimer. Mg(2+) serves as cofactor. [4Fe-4S] cluster is required as a cofactor.

It localises to the cytoplasm. It carries out the reaction cytidine(32) in tRNA + S-sulfanyl-L-cysteinyl-[cysteine desulfurase] + AH2 + ATP = 2-thiocytidine(32) in tRNA + L-cysteinyl-[cysteine desulfurase] + A + AMP + diphosphate + H(+). Its pathway is tRNA modification. Functionally, catalyzes the ATP-dependent 2-thiolation of cytidine in position 32 of tRNA, to form 2-thiocytidine (s(2)C32). The sulfur atoms are provided by the cysteine/cysteine desulfurase (IscS) system. This is tRNA-cytidine(32) 2-sulfurtransferase from Escherichia coli (strain K12 / MC4100 / BW2952).